An 87-amino-acid chain; its full sequence is Large ribosomal subunit protein bL27 (87 aa).

A disordered region spans residues 1–23 (MAHKKGTGSTRNGRDSNAQRLGV). The segment covering 7 to 19 (TGSTRNGRDSNAQ) has biased composition (polar residues).

The protein belongs to the bacterial ribosomal protein bL27 family.

The sequence is that of Large ribosomal subunit protein bL27 (rpmA) from Synechocystis sp. (strain ATCC 27184 / PCC 6803 / Kazusa).